The sequence spans 159 residues: U-actitoxin-Avd13b (159 aa).

The first 18 residues, 1–18 (MKSIFLVFFAVCLVKAEA), serve as a signal peptide directing secretion. Residues 19 to 26 (GKGRKREP) constitute a propeptide that is removed on maturation. 2 cysteine pairs are disulfide-bonded: Cys33/Cys45 and Cys36/Cys52. Residues 59–60 (EP) constitute a propeptide that is removed on maturation. Disulfide bonds link Cys67–Cys79 and Cys70–Cys86. Residues 93 to 94 (EP) constitute a propeptide that is removed on maturation. 2 cysteine pairs are disulfide-bonded: Cys101–Cys113 and Cys104–Cys120. Positions 127–128 (EP) are excised as a propeptide. Disulfide bonds link Cys135–Cys147 and Cys138–Cys154.

This sequence belongs to the sea anemone BBH family.

The protein localises to the secreted. It is found in the nematocyst. Its function is as follows. Inhibits ion channels. This Anemonia viridis (Snakelocks anemone) protein is U-actitoxin-Avd13b.